Reading from the N-terminus, the 154-residue chain is Myoglobin (154 aa).

The region spanning 2 to 148 (GLSEAEWQLV…FRKDIAAKYK (147 aa)) is the Globin domain. Phosphoserine is present on S4. Residue H65 coordinates nitrite. H65 is an O2 binding site. A Phosphothreonine modification is found at T68. Heme b is bound at residue H94.

It belongs to the globin family. In terms of assembly, monomeric.

The protein localises to the cytoplasm. Its subcellular location is the sarcoplasm. It catalyses the reaction Fe(III)-heme b-[protein] + nitric oxide + H2O = Fe(II)-heme b-[protein] + nitrite + 2 H(+). It carries out the reaction H2O2 + AH2 = A + 2 H2O. Functionally, monomeric heme protein which primary function is to store oxygen and facilitate its diffusion within muscle tissues. Reversibly binds oxygen through a pentacoordinated heme iron and enables its timely and efficient release as needed during periods of heightened demand. Depending on the oxidative conditions of tissues and cells, and in addition to its ability to bind oxygen, it also has a nitrite reductase activity whereby it regulates the production of bioactive nitric oxide. Under stress conditions, like hypoxia and anoxia, it also protects cells against reactive oxygen species thanks to its pseudoperoxidase activity. The chain is Myoglobin (MB) from Ziphius cavirostris (Cuvier's beaked whale).